Consider the following 1196-residue polypeptide: Jouberin (1196 aa).

Residues 13–45 adopt a coiled-coil conformation; the sequence is KVRFEELLKTHSDLMREKKKLKKKLVRSEENIS. At Ser-45 the chain carries Phosphoserine. 3 disordered regions span residues 56 to 186, 215 to 242, and 254 to 327; these read MKET…EEDE, QLTY…KEVP, and ISGD…HEIT. Residues 80–91 show a composition bias toward polar residues; that stretch reads DDVSAANTNNLK. Basic residues predominate over residues 92 to 101; the sequence is KSTRVTKNKL. The span at 102–113 shows a compositional bias: polar residues; sequence RNTQLATENPNG. Composition is skewed to basic and acidic residues over residues 141–154, 166–179, and 224–233; these read LKPE…DSTH, DHQK…GREE, and LFHDDKLSSE. Positions 141-434 are interaction with HAP1; that stretch reads LKPETPENKV…VFNENFPYLL (294 aa). Over residues 300 to 309 the composition is skewed to basic residues; the sequence is KPKKTKKKTK. 7 WD repeats span residues 607–649, 652–691, 695–735, 742–781, 797–837, 841–880, and 885–926; these read AGER…FMRE, GHLN…TNTF, PHPS…DSAI, VHKS…NDLE, EFKG…ARKF, ANYR…QVAM, and PFKS…AQQE. Ser-1002 is modified (phosphoserine). An SH3 domain is found at 1051 to 1111; sequence DTAPTVVALY…PANHVASETL (61 aa). Residues 1115-1196 are disordered; that stretch reads LPPEIKERSP…QAGRKVTLIE (82 aa). Basic and acidic residues-rich tracts occupy residues 1117-1136 and 1161-1182; these read PEIK…KIEK and THSE…DTRM. At Ser-1123 the chain carries Phosphoserine.

As to quaternary structure, self-associates. Part of the tectonic-like complex (also named B9 complex). Interacts with MKS1. Interacts with NPHP1; probably as heterodimers and/or AHI1(2):NPHP1(2) heterotetramers. Interacts (via SH3 domain) with the dynamin GTPase DNM2. Interacts with HAP1; probably as AHI1(2):HAP1(2) heterotetramers. Interacts with RAB8A. Interacts with CEND1. Interacts with CTNNB1/beta-catenin. Interacts with SPATA7. In terms of tissue distribution, highly expressed in the most primitive normal hematopoietic cells. Expressed in brain, particularly in neurons that give rise to the crossing axons of the corticospinal tract and superior cerebellar peduncles. Expressed in kidney (renal collecting duct cells) (at protein level).

It is found in the cytoplasm. The protein localises to the cytoskeleton. It localises to the cilium basal body. The protein resides in the cell junction. Its subcellular location is the adherens junction. It is found in the microtubule organizing center. The protein localises to the centrosome. It localises to the centriole. Its function is as follows. Involved in vesicle trafficking and required for ciliogenesis, formation of primary non-motile cilium, and recruitment of RAB8A to the basal body of primary cilium. Component of the tectonic-like complex, a complex localized at the transition zone of primary cilia and acting as a barrier that prevents diffusion of transmembrane proteins between the cilia and plasma membranes. Involved in neuronal differentiation. As a positive modulator of classical Wnt signaling, may play a crucial role in ciliary signaling during cerebellum embryonic development. This is Jouberin (AHI1) from Homo sapiens (Human).